The following is a 276-amino-acid chain: Diaminopimelate epimerase (276 aa).

Positions 13, 46, and 66 each coordinate substrate. Cys75 functions as the Proton donor in the catalytic mechanism. Substrate contacts are provided by residues 76-77, Asn159, Asn192, and 210-211; these read GN and ER. Cys219 (proton acceptor) is an active-site residue. 220-221 contributes to the substrate binding site; sequence GT.

The protein belongs to the diaminopimelate epimerase family. As to quaternary structure, homodimer.

Its subcellular location is the cytoplasm. The enzyme catalyses (2S,6S)-2,6-diaminopimelate = meso-2,6-diaminopimelate. It participates in amino-acid biosynthesis; L-lysine biosynthesis via DAP pathway; DL-2,6-diaminopimelate from LL-2,6-diaminopimelate: step 1/1. In terms of biological role, catalyzes the stereoinversion of LL-2,6-diaminopimelate (L,L-DAP) to meso-diaminopimelate (meso-DAP), a precursor of L-lysine and an essential component of the bacterial peptidoglycan. The polypeptide is Diaminopimelate epimerase (Tolumonas auensis (strain DSM 9187 / NBRC 110442 / TA 4)).